The chain runs to 134 residues: Interleukin-4 (134 aa).

A signal peptide spans 1–23; the sequence is MGLTYQLLPALVCLLACTSFIQG. Disulfide bonds link cysteine 24–cysteine 133 and cysteine 48–cysteine 88. Asparagine 38 carries an N-linked (GlcNAc...) asparagine glycan. An N-linked (GlcNAc...) asparagine glycan is attached at asparagine 101.

Belongs to the IL-4/IL-13 family.

It localises to the secreted. In terms of biological role, participates in at least several B-cell activation processes as well as of other cell types. It is a costimulator of DNA-synthesis. It induces the expression of class II MHC molecules on resting B-cells. It enhances both secretion and cell surface expression of IgE and IgG1. It also regulates the expression of the low affinity Fc receptor for IgE (CD23) on both lymphocytes and monocytes. Positively regulates IL31RA expression in macrophages. Stimulates autophagy in dendritic cells by interfering with mTORC1 signaling and through the induction of RUFY4. This is Interleukin-4 (IL4) from Equus caballus (Horse).